We begin with the raw amino-acid sequence, 147 residues long: UPF0178 protein AFE_3267 (147 aa).

This sequence belongs to the UPF0178 family.

This chain is UPF0178 protein AFE_3267, found in Acidithiobacillus ferrooxidans (strain ATCC 23270 / DSM 14882 / CIP 104768 / NCIMB 8455) (Ferrobacillus ferrooxidans (strain ATCC 23270)).